The chain runs to 653 residues: Extracellular metalloproteinase (653 aa).

A signal peptide spans Met-1–Gly-19. A propeptide spanning residues His-20–Asp-244 is cleaved from the precursor. 3 N-linked (GlcNAc...) asparagine glycosylation sites follow: Asn-327, Asn-336, and Asn-412. A Zn(2+)-binding site is contributed by His-429. The active site involves Glu-430. His-433 contributes to the Zn(2+) binding site. Asn-636 and Asn-637 each carry an N-linked (GlcNAc...) asparagine glycan.

Belongs to the peptidase M36 family. Zn(2+) is required as a cofactor.

It localises to the secreted. Its function is as follows. Secreted metalloproteinase that allows assimilation of proteinaceous substrates. This Pyrenophora tritici-repentis (strain Pt-1C-BFP) (Wheat tan spot fungus) protein is Extracellular metalloproteinase (MEP).